The sequence spans 206 residues: MGSNEVATGDPLATLDWNKGEGLLPVIVQDADNLRVLMLGYMNAQALAVTQQRGEVTFFSRSKQRLWTKGESSGNVLRVVSIQTDCDADTLLVQARPHGPTCHLGRTSCFPSAPGQFLGSLDALVAERERERPHGSYTTKLFEQGIRRIAQKVGEEGVETALAGVVQDDDALLGESADLLYHLIVLLRARGLGLGDAAALLESRHQ.

The tract at residues Met1 to Phe117 is phosphoribosyl-AMP cyclohydrolase. The phosphoribosyl-ATP pyrophosphohydrolase stretch occupies residues Leu118–Gln206.

The protein in the N-terminal section; belongs to the PRA-CH family. In the C-terminal section; belongs to the PRA-PH family.

The protein resides in the cytoplasm. It carries out the reaction 1-(5-phospho-beta-D-ribosyl)-ATP + H2O = 1-(5-phospho-beta-D-ribosyl)-5'-AMP + diphosphate + H(+). The catalysed reaction is 1-(5-phospho-beta-D-ribosyl)-5'-AMP + H2O = 1-(5-phospho-beta-D-ribosyl)-5-[(5-phospho-beta-D-ribosylamino)methylideneamino]imidazole-4-carboxamide. It participates in amino-acid biosynthesis; L-histidine biosynthesis; L-histidine from 5-phospho-alpha-D-ribose 1-diphosphate: step 2/9. Its pathway is amino-acid biosynthesis; L-histidine biosynthesis; L-histidine from 5-phospho-alpha-D-ribose 1-diphosphate: step 3/9. The protein is Histidine biosynthesis bifunctional protein HisIE of Xanthomonas axonopodis pv. citri (strain 306).